We begin with the raw amino-acid sequence, 524 residues long: Thioredoxin reductase 2, mitochondrial (524 aa).

The transit peptide at 1-34 directs the protein to the mitochondrion; the sequence is MVAAMVAALRGPSRRFRPRTRALTRGTRGAASAA. FAD is bound at residue 41–70; sequence DLLVIGGGSGGLACAKEAAQLGKKVAVADY. At Lys-79 the chain carries N6-succinyllysine. A disulfide bridge links Cys-86 with Cys-91. Residues Lys-175 and Lys-329 each carry the N6-succinyllysine modification. His-497 acts as the Proton acceptor in catalysis. The cysteinyl-selenocysteine (Cys-Sec) cross-link spans 522–523; it reads CU. A non-standard amino acid (selenocysteine) is located at residue Sec-523.

This sequence belongs to the class-I pyridine nucleotide-disulfide oxidoreductase family. As to quaternary structure, homodimer. It depends on FAD as a cofactor. In terms of tissue distribution, expressed in liver, heart, testis and kidney.

It localises to the mitochondrion. The catalysed reaction is [thioredoxin]-dithiol + NADP(+) = [thioredoxin]-disulfide + NADPH + H(+). Involved in the control of reactive oxygen species levels and the regulation of mitochondrial redox homeostasis. Maintains thioredoxin in a reduced state. May play a role in redox-regulated cell signaling. The sequence is that of Thioredoxin reductase 2, mitochondrial from Mus musculus (Mouse).